Here is a 258-residue protein sequence, read N- to C-terminus: uncharacterized protein (258 aa).

This is an uncharacterized protein from Bacillus sp. (strain OxB-1).